Here is a 492-residue protein sequence, read N- to C-terminus: Ribose import ATP-binding protein RbsA (492 aa).

ABC transporter domains are found at residues 3–239 and 249–492; these read IEMK…VGRS and AEIR…TGGK. Position 35–42 (35–42) interacts with ATP; it reads GENGAGKS.

This sequence belongs to the ABC transporter superfamily. Ribose importer (TC 3.A.1.2.1) family. As to quaternary structure, the complex is composed of an ATP-binding protein (RbsA), two transmembrane proteins (RbsC) and a solute-binding protein (RbsB).

It is found in the cell membrane. It carries out the reaction D-ribose(out) + ATP + H2O = D-ribose(in) + ADP + phosphate + H(+). Part of the ABC transporter complex RbsABC involved in ribose import. Responsible for energy coupling to the transport system. The protein is Ribose import ATP-binding protein RbsA of Lactococcus lactis subsp. cremoris (strain SK11).